The chain runs to 245 residues: Ribonuclease PH (245 aa).

Phosphate contacts are provided by residues R86 and 124-126 (GTR).

This sequence belongs to the RNase PH family. Homohexameric ring arranged as a trimer of dimers. It has been suggested that the active form is the dimer which binds tRNA and that the hexameric form protects the substrate recognition loop (approximately residues 65-82) from proteolysis.

It catalyses the reaction tRNA(n+1) + phosphate = tRNA(n) + a ribonucleoside 5'-diphosphate. Its function is as follows. Phosphorolytic 3'-5' exoribonuclease that plays an important role in tRNA 3'-end maturation. Removes nucleotide residues following the 3'-CCA terminus of tRNAs; can also add nucleotides to the ends of RNA molecules by using nucleoside diphosphates as substrates, but this may not be physiologically important. Probably plays a role in initiation of 16S rRNA degradation (leading to ribosome degradation) during starvation. Plays a role in the secondary pathway of 23S rRNA 3' end maturation. This Bacillus subtilis (strain 168) protein is Ribonuclease PH.